Consider the following 141-residue polypeptide: Large ribosomal subunit protein uL16 (141 aa).

The segment covering 1 to 19 (MLMPKKTKYRKQQKGRNRG) has biased composition (basic residues). The interval 1–22 (MLMPKKTKYRKQQKGRNRGKAY) is disordered.

The protein belongs to the universal ribosomal protein uL16 family. As to quaternary structure, part of the 50S ribosomal subunit.

Binds 23S rRNA and is also seen to make contacts with the A and possibly P site tRNAs. The polypeptide is Large ribosomal subunit protein uL16 (Nitratiruptor sp. (strain SB155-2)).